Here is a 199-residue protein sequence, read N- to C-terminus: Recombination protein RecR (199 aa).

The segment at 56–71 adopts a C4-type zinc-finger fold; sequence CQVCFHLSAESTCEIC. Positions 79–173 constitute a Toprim domain; sequence QTLCVVADSR…KVTRIAFGLP (95 aa).

The protein belongs to the RecR family.

May play a role in DNA repair. It seems to be involved in an RecBC-independent recombinational process of DNA repair. It may act with RecF and RecO. The chain is Recombination protein RecR from Gloeothece citriformis (strain PCC 7424) (Cyanothece sp. (strain PCC 7424)).